The chain runs to 306 residues: tRNA dimethylallyltransferase (306 aa).

12 to 19 (GPTGTKKS) contributes to the ATP binding site.

It belongs to the IPP transferase family. Monomer. The cofactor is Mg(2+).

The enzyme catalyses adenosine(37) in tRNA + dimethylallyl diphosphate = N(6)-dimethylallyladenosine(37) in tRNA + diphosphate. In terms of biological role, catalyzes the transfer of a dimethylallyl group onto the adenine at position 37 in tRNAs that read codons beginning with uridine, leading to the formation of N6-(dimethylallyl)adenosine (i(6)A). The sequence is that of tRNA dimethylallyltransferase from Mycoplasmoides gallisepticum (strain R(low / passage 15 / clone 2)) (Mycoplasma gallisepticum).